We begin with the raw amino-acid sequence, 487 residues long: Glutamyl-tRNA(Gln) amidotransferase subunit A (487 aa).

Active-site charge relay system residues include K80 and S155. Residue S179 is the Acyl-ester intermediate of the active site.

Belongs to the amidase family. GatA subfamily. Heterotrimer of A, B and C subunits.

The catalysed reaction is L-glutamyl-tRNA(Gln) + L-glutamine + ATP + H2O = L-glutaminyl-tRNA(Gln) + L-glutamate + ADP + phosphate + H(+). In terms of biological role, allows the formation of correctly charged Gln-tRNA(Gln) through the transamidation of misacylated Glu-tRNA(Gln) in organisms which lack glutaminyl-tRNA synthetase. The reaction takes place in the presence of glutamine and ATP through an activated gamma-phospho-Glu-tRNA(Gln). This is Glutamyl-tRNA(Gln) amidotransferase subunit A from Chloroflexus aurantiacus (strain ATCC 29366 / DSM 635 / J-10-fl).